The sequence spans 131 residues: D-ribose pyranase (131 aa).

The active-site Proton donor is the His20. Substrate is bound by residues Asp28, His98, and Tyr120–Asn122.

The protein belongs to the RbsD / FucU family. RbsD subfamily. As to quaternary structure, homodecamer.

It localises to the cytoplasm. It carries out the reaction beta-D-ribopyranose = beta-D-ribofuranose. It functions in the pathway carbohydrate metabolism; D-ribose degradation; D-ribose 5-phosphate from beta-D-ribopyranose: step 1/2. Functionally, catalyzes the interconversion of beta-pyran and beta-furan forms of D-ribose. The protein is D-ribose pyranase of Bacillus cereus (strain ZK / E33L).